The chain runs to 119 residues: MAKVNQNIIKALEDEQLKTDVPAFGAGDTVVVQVKVKEGAKERLQAFEGVVIAKRNRGLHSAFTVRKISNGEGVERVFQTHSPLIDSVTVKRRGAVRRAKLYYLRERSGKSARIREKLN.

It belongs to the bacterial ribosomal protein bL19 family.

Its function is as follows. This protein is located at the 30S-50S ribosomal subunit interface and may play a role in the structure and function of the aminoacyl-tRNA binding site. This is Large ribosomal subunit protein bL19 from Pseudoalteromonas translucida (strain TAC 125).